Here is a 274-residue protein sequence, read N- to C-terminus: Bis(5'-nucleosyl)-tetraphosphatase, symmetrical (274 aa).

It belongs to the Ap4A hydrolase family.

It catalyses the reaction P(1),P(4)-bis(5'-adenosyl) tetraphosphate + H2O = 2 ADP + 2 H(+). Functionally, hydrolyzes diadenosine 5',5'''-P1,P4-tetraphosphate to yield ADP. This is Bis(5'-nucleosyl)-tetraphosphatase, symmetrical from Janthinobacterium sp. (strain Marseille) (Minibacterium massiliensis).